The sequence spans 203 residues: N-(5'-phosphoribosyl)anthranilate isomerase (203 aa).

The protein belongs to the TrpF family.

The catalysed reaction is N-(5-phospho-beta-D-ribosyl)anthranilate = 1-(2-carboxyphenylamino)-1-deoxy-D-ribulose 5-phosphate. It participates in amino-acid biosynthesis; L-tryptophan biosynthesis; L-tryptophan from chorismate: step 3/5. This is N-(5'-phosphoribosyl)anthranilate isomerase from Thermoanaerobacter sp. (strain X514).